The primary structure comprises 532 residues: Phosphoribosylamine--glycine ligase, chloroplastic (532 aa).

Residues M1–C75 constitute a chloroplast transit peptide. Positions K204–K412 constitute an ATP-grasp domain.

It belongs to the GARS family.

The protein localises to the plastid. It localises to the chloroplast. The enzyme catalyses 5-phospho-beta-D-ribosylamine + glycine + ATP = N(1)-(5-phospho-beta-D-ribosyl)glycinamide + ADP + phosphate + H(+). It participates in purine metabolism; IMP biosynthesis via de novo pathway; N(1)-(5-phospho-D-ribosyl)glycinamide from 5-phospho-alpha-D-ribose 1-diphosphate: step 2/2. This is Phosphoribosylamine--glycine ligase, chloroplastic (PUR2) from Arabidopsis thaliana (Mouse-ear cress).